The following is a 355-amino-acid chain: Probable nitronate monooxygenase (355 aa).

FMN contacts are provided by residues N71, Q175, G180, G218, and 237–240 (QMGT).

Belongs to the nitronate monooxygenase family. NMO class I subfamily. It depends on FMN as a cofactor.

The catalysed reaction is 3 propionate 3-nitronate + 3 O2 + H2O = 3 3-oxopropanoate + 2 nitrate + nitrite + H2O2 + 3 H(+). Functionally, nitronate monooxygenase that uses molecular oxygen to catalyze the oxidative denitrification of alkyl nitronates. Acts on propionate 3-nitronate (P3N), the presumed physiological substrate. Probably functions in the detoxification of P3N, a metabolic poison produced by plants and fungi as a defense mechanism. The sequence is that of Probable nitronate monooxygenase from Staphylococcus aureus (strain JH1).